Reading from the N-terminus, the 540-residue chain is Chaperonin GroEL (540 aa).

Residues 29 to 32 (TLGP), 86 to 90 (DGTTT), glycine 413, 476 to 478 (NAA), and aspartate 492 contribute to the ATP site.

The protein belongs to the chaperonin (HSP60) family. In terms of assembly, forms a cylinder of 14 subunits composed of two heptameric rings stacked back-to-back. Interacts with the co-chaperonin GroES.

The protein resides in the cytoplasm. It catalyses the reaction ATP + H2O + a folded polypeptide = ADP + phosphate + an unfolded polypeptide.. Together with its co-chaperonin GroES, plays an essential role in assisting protein folding. The GroEL-GroES system forms a nano-cage that allows encapsulation of the non-native substrate proteins and provides a physical environment optimized to promote and accelerate protein folding. In Streptococcus sanguinis, this protein is Chaperonin GroEL.